The sequence spans 244 residues: Orotidine 5'-phosphate decarboxylase (244 aa).

Substrate contacts are provided by residues aspartate 14, lysine 36, 63 to 72 (DLKFHDIPNT), threonine 127, arginine 188, glutamine 197, glycine 217, and arginine 218. The active-site Proton donor is the lysine 65.

Belongs to the OMP decarboxylase family. Type 1 subfamily. In terms of assembly, homodimer.

The catalysed reaction is orotidine 5'-phosphate + H(+) = UMP + CO2. It functions in the pathway pyrimidine metabolism; UMP biosynthesis via de novo pathway; UMP from orotate: step 2/2. Catalyzes the decarboxylation of orotidine 5'-monophosphate (OMP) to uridine 5'-monophosphate (UMP). This Syntrophotalea carbinolica (strain DSM 2380 / NBRC 103641 / GraBd1) (Pelobacter carbinolicus) protein is Orotidine 5'-phosphate decarboxylase.